The sequence spans 173 residues: MASRKTKKKEGGGLRAQRASSNVFSNFEQTQIQEFKEAFTLMDQNRDGFIDKEDLKDTYASLGKTNIKDDELDAMLKEASGPINFTMFLNMFGAKLTGTDAEETILNAFKMLDPEGKGSINKDYIKRLLMSQADKMTAEEVDQMFQFATIDAAGNLDYKALSYVLTHGEEKEE.

Residues 1 to 22 (MASRKTKKKEGGGLRAQRASSN) are disordered. EF-hand domains are found at residues 30–65 (TQIQEFKEAFTLMDQNRDGFIDKEDLKDTYASLGKT), 100–135 (DAEETILNAFKMLDPEGKGSINKDYIKRLLMSQADK), and 136–171 (MTAEEVDQMFQFATIDAAGNLDYKALSYVLTHGEEK). The Ca(2+) site is built by Asp43, Asn45, Asp47, and Asp54.

Myosin is a hexamer of 2 heavy chains and 4 light chains. Jaw-closing muscles.

In Felis catus (Cat), this protein is Myosin light chain 5 (MYL5).